Consider the following 181-residue polypeptide: Epidermin decarboxylase (181 aa).

H67 is a catalytic residue.

Belongs to the HFCD (homooligomeric flavin containing Cys decarboxylase) superfamily. As to quaternary structure, homododecamer. It depends on FMN as a cofactor.

Its function is as follows. Catalyzes the removal of two reducing equivalents (oxidative decarboxylation) from the cysteine residue of the C-terminal meso-lanthionine of epidermin to form a --C==C-- double bond. The sequence is that of Epidermin decarboxylase (epiD) from Staphylococcus epidermidis.